The sequence spans 318 residues: Acetaldehyde dehydrogenase 1 (318 aa).

15–18 provides a ligand contact to NAD(+); it reads SGNI. The active-site Acyl-thioester intermediate is the Cys133. NAD(+) is bound by residues 164–172 and Asn289; that span reads SAGPGTRAN.

This sequence belongs to the acetaldehyde dehydrogenase family.

It catalyses the reaction acetaldehyde + NAD(+) + CoA = acetyl-CoA + NADH + H(+). This chain is Acetaldehyde dehydrogenase 1 (xylQ), found in Azotobacter vinelandii (strain DJ / ATCC BAA-1303).